Consider the following 205-residue polypeptide: Putative 3-methyladenine DNA glycosylase (205 aa).

Belongs to the DNA glycosylase MPG family.

The protein is Putative 3-methyladenine DNA glycosylase of Bacillus cereus (strain Q1).